The chain runs to 269 residues: Proenkephalin-A (269 aa).

The first 24 residues, 1-24 (MAQFLRLCIWLLALGSCLLATVQA), serve as a signal peptide directing secretion. Cystine bridges form between Cys26-Cys48, Cys30-Cys52, and Cys33-Cys65. The tract at residues 165-191 (DNRAKDSHQQESTNNDEDSTSKRYGGF) is disordered. 2 propeptides span residues 198–209 (SPQLEDEAKELQ) and 219–229 (VGRPEWWMDYQ). At Ser253 the chain carries Phosphoserine.

Belongs to the opioid neuropeptide precursor family. In terms of processing, proenkephalin-A is cleaved by CTSL to generate Met-enkephalin. Post-translationally, processed and degraded by ACE. Probably cleaved by ACE. In terms of processing, processed by ACE to generate Met-enkephalin in the nucleus accumbens of the brain. Post-translationally, the N-terminal domain contains 6 conserved cysteines thought to be involved in disulfide bonding and/or processing. Expressed in brain, heart and testis.

It localises to the secreted. It is found in the cytoplasmic vesicle. The protein resides in the secretory vesicle. Its subcellular location is the chromaffin granule lumen. Its function is as follows. Neuropeptide that competes with and mimic the effects of opiate drugs. They play a role in a number of physiologic functions, including pain perception and responses to stress. Functionally, met-enkephalin-Arg-Phe neuropeptide acts as a strong ligand of Mu-type opioid receptor OPRM1. Met-enkephalin-Arg-Phe-binding to OPRM1 in the nucleus accumbens of the brain increases activation of OPRM1, leading to long-term synaptic depression of glutamate release. Increases glutamate release in the striatum and decreases GABA concentration in the striatum. In terms of biological role, increases glutamate release in the striatum. This chain is Proenkephalin-A (Penk), found in Rattus norvegicus (Rat).